Here is a 369-residue protein sequence, read N- to C-terminus: Molybdenum import ATP-binding protein ModC (369 aa).

Residues 4 to 239 (LQLRAVVADR…PRSRFGARIA (236 aa)) form the ABC transporter domain. 31–38 (GPNGAGKS) contacts ATP. A Mop domain is found at 293–361 (HGSPRNIVGL…VKAQEVALHP (69 aa)).

It belongs to the ABC transporter superfamily. Molybdate importer (TC 3.A.1.8) family. The complex is composed of two ATP-binding proteins (ModC), two transmembrane proteins (ModB) and a solute-binding protein (ModA).

Its subcellular location is the cell membrane. The catalysed reaction is molybdate(out) + ATP + H2O = molybdate(in) + ADP + phosphate + H(+). Part of the ABC transporter complex ModABC involved in molybdenum import. Responsible for energy coupling to the transport system. The sequence is that of Molybdenum import ATP-binding protein ModC from Mycobacterium tuberculosis (strain CDC 1551 / Oshkosh).